The sequence spans 616 residues: Dihydroxy-acid dehydratase (616 aa).

Residue D81 participates in Mg(2+) binding. C122 is a binding site for [2Fe-2S] cluster. D123 and K124 together coordinate Mg(2+). At K124 the chain carries N6-carboxylysine. C195 contacts [2Fe-2S] cluster. E491 contributes to the Mg(2+) binding site. S517 (proton acceptor) is an active-site residue.

It belongs to the IlvD/Edd family. As to quaternary structure, homodimer. It depends on [2Fe-2S] cluster as a cofactor. Requires Mg(2+) as cofactor.

The enzyme catalyses (2R)-2,3-dihydroxy-3-methylbutanoate = 3-methyl-2-oxobutanoate + H2O. It carries out the reaction (2R,3R)-2,3-dihydroxy-3-methylpentanoate = (S)-3-methyl-2-oxopentanoate + H2O. The protein operates within amino-acid biosynthesis; L-isoleucine biosynthesis; L-isoleucine from 2-oxobutanoate: step 3/4. It participates in amino-acid biosynthesis; L-valine biosynthesis; L-valine from pyruvate: step 3/4. In terms of biological role, functions in the biosynthesis of branched-chain amino acids. Catalyzes the dehydration of (2R,3R)-2,3-dihydroxy-3-methylpentanoate (2,3-dihydroxy-3-methylvalerate) into 2-oxo-3-methylpentanoate (2-oxo-3-methylvalerate) and of (2R)-2,3-dihydroxy-3-methylbutanoate (2,3-dihydroxyisovalerate) into 2-oxo-3-methylbutanoate (2-oxoisovalerate), the penultimate precursor to L-isoleucine and L-valine, respectively. This Escherichia coli O17:K52:H18 (strain UMN026 / ExPEC) protein is Dihydroxy-acid dehydratase.